Here is a 497-residue protein sequence, read N- to C-terminus: Vacuolar-processing enzyme beta-isozyme 1 (497 aa).

The signal sequence occupies residues 1-23; that stretch reads MAARCWVWGFVVALLAVAAAADG. Asn-153 carries N-linked (GlcNAc...) asparagine glycosylation. Residue His-180 is part of the active site. Cys-222 serves as the catalytic Nucleophile. A disulfide bridge connects residues Cys-255 and Cys-269. N-linked (GlcNAc...) asparagine glycosylation occurs at Asn-340. 2 disulfides stabilise this stretch: Cys-432–Cys-462 and Cys-444–Cys-479.

This sequence belongs to the peptidase C13 family. Auto-catalytic activation.

The protein localises to the protein storage vacuole. The enzyme catalyses Hydrolysis of proteins and small molecule substrates at -Asn-|-Xaa- bonds.. In terms of biological role, asparagine-specific endopeptidase that may be involved in processing of proteins targeted to vacuoles. Cysteine protease required for post-translational proteolysis of seed storage proteins in the protein storage vacuole (PSV) of developing seeds, by processing of proglutelin precursor to mature glutelin subunits, thus contributing to the formation of protein crystalline structures in PSV. This Oryza sativa subsp. indica (Rice) protein is Vacuolar-processing enzyme beta-isozyme 1.